Reading from the N-terminus, the 491-residue chain is Ribonuclease Y (491 aa).

The chain crosses the membrane as a helical span at residues 4 to 24 (LIATVGVVAVAALVIAIFVVI). A KH domain is found at 181-247 (VVSVVHLPGD…RVALERLVDD (67 aa)). Residues 307–400 (VLKHLVETAH…TQAADAISGG (94 aa)) form the HD domain.

Belongs to the RNase Y family.

It is found in the cell membrane. Functionally, endoribonuclease that initiates mRNA decay. The polypeptide is Ribonuclease Y (Acidothermus cellulolyticus (strain ATCC 43068 / DSM 8971 / 11B)).